Here is a 379-residue protein sequence, read N- to C-terminus: Cytochrome b (379 aa).

Helical transmembrane passes span 33 to 53 (FGSL…FLAM), 77 to 98 (WLIR…FIHV), 113 to 133 (WNIG…GYVL), and 178 to 198 (FFAF…VHLL). Heme b contacts are provided by His-83 and His-97. Positions 182 and 196 each coordinate heme b. A ubiquinone is bound at residue His-201. The next 4 helical transmembrane spans lie at 226 to 246 (TKDL…ALFF), 288 to 308 (LGGV…PLLN), 320 to 340 (VTQV…WIGG), and 347 to 367 (FTTI…ILIP).

Belongs to the cytochrome b family. The cytochrome bc1 complex contains 11 subunits: 3 respiratory subunits (MT-CYB, CYC1 and UQCRFS1), 2 core proteins (UQCRC1 and UQCRC2) and 6 low-molecular weight proteins (UQCRH/QCR6, UQCRB/QCR7, UQCRQ/QCR8, UQCR10/QCR9, UQCR11/QCR10 and a cleavage product of UQCRFS1). This cytochrome bc1 complex then forms a dimer. The cofactor is heme b.

It localises to the mitochondrion inner membrane. Its function is as follows. Component of the ubiquinol-cytochrome c reductase complex (complex III or cytochrome b-c1 complex) that is part of the mitochondrial respiratory chain. The b-c1 complex mediates electron transfer from ubiquinol to cytochrome c. Contributes to the generation of a proton gradient across the mitochondrial membrane that is then used for ATP synthesis. This is Cytochrome b (MT-CYB) from Akodon paranaensis (Parana grass mouse).